Consider the following 227-residue polypeptide: MKFIILLFALIHITVAANRALIIDYSYYGCNLDCYIASNQENTCGAHDDDVSDQQYHACLCMNYDYFTNLMNCNCFDSNVYYVSSSICSMATASSEFETYDGAPSTMDVSTTDYSSSTEDISFTEDVSFTEDDSFTEYSSFTKYSSFTKYSSSVSSFTKVIWSTLETSSIKGIAATTSSYFTNAQTTSGTANDSSISKPSGSQIFVLCVISVVGFIFFFLFFLSLFV.

The N-terminal stretch at 1 to 16 is a signal peptide; that stretch reads MKFIILLFALIHITVA. Asn-192 is a glycosylation site (N-linked (GlcNAc...) asparagine). A lipid anchor (GPI-anchor amidated serine) is attached at Ser-200. Positions 201-227 are cleaved as a propeptide — removed in mature form; the sequence is GSQIFVLCVISVVGFIFFFLFFLSLFV.

It belongs to the IHD1 family. Post-translationally, the GPI-anchor is attached to the protein in the endoplasmic reticulum and serves to target the protein to the cell surface. There, the glucosamine-inositol phospholipid moiety is cleaved off and the GPI-modified mannoprotein is covalently attached via its lipidless GPI glycan remnant to the 1,6-beta-glucan of the outer cell wall layer.

The protein resides in the secreted. It localises to the cell wall. The protein localises to the membrane. Its function is as follows. Probable GPI-anchored cell wall protein that may be involved in cell wall organization, hyphal growth, as well as in virulence. The sequence is that of Probable cell wall protein PGA42 (PGA42) from Candida albicans (strain SC5314 / ATCC MYA-2876) (Yeast).